The chain runs to 424 residues: Histidine--tRNA ligase (424 aa).

It belongs to the class-II aminoacyl-tRNA synthetase family. Homodimer.

Its subcellular location is the cytoplasm. It carries out the reaction tRNA(His) + L-histidine + ATP = L-histidyl-tRNA(His) + AMP + diphosphate + H(+). The chain is Histidine--tRNA ligase from Escherichia coli O139:H28 (strain E24377A / ETEC).